The primary structure comprises 249 residues: 3-deoxy-manno-octulosonate cytidylyltransferase (249 aa).

This sequence belongs to the KdsB family.

The protein localises to the cytoplasm. It catalyses the reaction 3-deoxy-alpha-D-manno-oct-2-ulosonate + CTP = CMP-3-deoxy-beta-D-manno-octulosonate + diphosphate. It functions in the pathway nucleotide-sugar biosynthesis; CMP-3-deoxy-D-manno-octulosonate biosynthesis; CMP-3-deoxy-D-manno-octulosonate from 3-deoxy-D-manno-octulosonate and CTP: step 1/1. Its pathway is bacterial outer membrane biogenesis; lipopolysaccharide biosynthesis. Activates KDO (a required 8-carbon sugar) for incorporation into bacterial lipopolysaccharide in Gram-negative bacteria. This chain is 3-deoxy-manno-octulosonate cytidylyltransferase, found in Photorhabdus laumondii subsp. laumondii (strain DSM 15139 / CIP 105565 / TT01) (Photorhabdus luminescens subsp. laumondii).